Reading from the N-terminus, the 90-residue chain is Large ribosomal subunit protein bL27 (90 aa).

The protein belongs to the bacterial ribosomal protein bL27 family.

This is Large ribosomal subunit protein bL27 from Rhodopseudomonas palustris (strain BisB5).